An 81-amino-acid polypeptide reads, in one-letter code: Small ribosomal subunit protein bS18 (81 aa).

This sequence belongs to the bacterial ribosomal protein bS18 family. As to quaternary structure, part of the 30S ribosomal subunit. Forms a tight heterodimer with protein bS6.

Functionally, binds as a heterodimer with protein bS6 to the central domain of the 16S rRNA, where it helps stabilize the platform of the 30S subunit. The polypeptide is Small ribosomal subunit protein bS18 (Rubrobacter xylanophilus (strain DSM 9941 / JCM 11954 / NBRC 16129 / PRD-1)).